The chain runs to 422 residues: UPF0597 protein Kole_0595 (422 aa).

The protein belongs to the UPF0597 family.

In Kosmotoga olearia (strain ATCC BAA-1733 / DSM 21960 / TBF 19.5.1), this protein is UPF0597 protein Kole_0595.